The chain runs to 398 residues: Dual specificity protein phosphatase 4 (398 aa).

The residue at position 2 (valine 2) is an N-acetylvaline. The Rhodanese domain occupies 45 to 163 (SGGKCLLLDC…FSSEYPEFCS (119 aa)). A Tyrosine-protein phosphatase domain is found at 199–340 (GPVEILPFLY…LLQFESQVLT (142 aa)). Cysteine 284 (phosphocysteine intermediate) is an active-site residue. Phosphoserine; by MAPK is present on residues serine 390 and serine 395.

Belongs to the protein-tyrosine phosphatase family. Non-receptor class dual specificity subfamily. Hollow spherical complex composed of 24 subunits with pseudooctahedral symmetry, has a tetramer as the basic unit. Phosphorylation in the C-terminus by ERK1/2 inhibits proteasomal degradation and stabilizes the protein.

The protein localises to the nucleus. It catalyses the reaction O-phospho-L-tyrosyl-[protein] + H2O = L-tyrosyl-[protein] + phosphate. The catalysed reaction is O-phospho-L-seryl-[protein] + H2O = L-seryl-[protein] + phosphate. The enzyme catalyses O-phospho-L-threonyl-[protein] + H2O = L-threonyl-[protein] + phosphate. In terms of biological role, regulates mitogenic signal transduction by dephosphorylating both Thr and Tyr residues on MAP kinases ERK1 and ERK2. The polypeptide is Dual specificity protein phosphatase 4 (Dusp4) (Mus musculus (Mouse)).